A 130-amino-acid polypeptide reads, in one-letter code: C-type natriuretic peptide 2 (130 aa).

The signal sequence occupies residues 1-22 (MAASSSSFVPLVLLFLAIPVEP). Residues 23–103 (RPSMTRDEAQ…LQQQSKTTRR (81 aa)) constitute a propeptide that is removed on maturation. A disordered region spans residues 57–77 (ELLPRRPGPPRSFGASPGALR). Residues Cys-114 and Cys-130 are joined by a disulfide bond.

Belongs to the natriuretic peptide family.

The protein localises to the secreted. Exhibits natriuretic and vasodepressant activity. Has cGMP-stimulating activity. May help to regulate body fluid homeostasis in a variety of aquatic environments. The protein is C-type natriuretic peptide 2 of Takifugu rubripes (Japanese pufferfish).